The primary structure comprises 205 residues: Imidazoleglycerol-phosphate dehydratase (205 aa).

Belongs to the imidazoleglycerol-phosphate dehydratase family.

Its subcellular location is the cytoplasm. The enzyme catalyses D-erythro-1-(imidazol-4-yl)glycerol 3-phosphate = 3-(imidazol-4-yl)-2-oxopropyl phosphate + H2O. It functions in the pathway amino-acid biosynthesis; L-histidine biosynthesis; L-histidine from 5-phospho-alpha-D-ribose 1-diphosphate: step 6/9. The chain is Imidazoleglycerol-phosphate dehydratase from Chloroflexus aurantiacus (strain ATCC 29366 / DSM 635 / J-10-fl).